The primary structure comprises 298 residues: Peroxisomal 2,4-dienoyl-CoA reductase [(3E)-enoyl-CoA-producing] (298 aa).

An NADP(+)-binding site is contributed by Gly19–Ile24. Arg44 is a binding site for substrate. Residue Asp69 coordinates NADP(+). Residues Arg71, Phe101, and Ser109–Asn111 contribute to the substrate site. NADP(+) is bound by residues Lys173 and Pro200 to Thr206. The interval Ser279–Leu298 is disordered. The short motif at Ser296–Leu298 is the Microbody targeting signal element.

This sequence belongs to the short-chain dehydrogenases/reductases (SDR) family. 2,4-dienoyl-CoA reductase subfamily.

The protein localises to the peroxisome. It carries out the reaction a (2E,4Z)-dienoyl-CoA + NADPH + H(+) = a 4,5-saturated-(3E)-enoyl-CoA + NADP(+). The catalysed reaction is a (2E,4E)-dienoyl-CoA + NADPH + H(+) = a 4,5-saturated-(3E)-enoyl-CoA + NADP(+). Auxiliary enzyme of beta-oxidation. Participates in the degradation of unsaturated fatty enoyl-CoA esters having double bonds in both even- and odd-numbered positions in peroxisome. Catalyzes the NADP-dependent reduction of 2,4-dienoyl-CoA to yield trans-3-enoyl-CoA. The polypeptide is Peroxisomal 2,4-dienoyl-CoA reductase [(3E)-enoyl-CoA-producing] (Arabidopsis thaliana (Mouse-ear cress)).